The sequence spans 534 residues: Glycolytic genes transcriptional activator GCR2 (534 aa).

The segment at L29 to T122 is disordered. Residues Q30 to P43 show a composition bias toward low complexity. Residues S64–D88 show a composition bias toward polar residues. The segment covering S89–T122 has biased composition (low complexity). Phosphoserine is present on S151. The disordered stretch occupies residues L230 to D333. Residues N238–Q252 are compositionally biased toward polar residues. Positions G253–N279 are enriched in low complexity. Residues P281 to R288 carry the Nuclear localization signal motif. Over residues N295–N304 the composition is skewed to low complexity. Polar residues predominate over residues I312–T328. S406 and S409 each carry phosphoserine. Residues I497 to R534 are leucine-zipper.

As to quaternary structure, homodimer via the leucine-zipper domain. Forms a complex with a GCR1 homodimer.

It is found in the nucleus. In terms of biological role, transcriptional activator required for the expression of glycolytic genes. Enhances the CT box-dependent transcriptional activation of a RAP1-GCR1 complex. Required for GCR1 phosphorylation. The protein is Glycolytic genes transcriptional activator GCR2 (GCR2) of Saccharomyces cerevisiae (strain ATCC 204508 / S288c) (Baker's yeast).